Here is a 468-residue protein sequence, read N- to C-terminus: Argininosuccinate lyase (468 aa).

It belongs to the lyase 1 family. Argininosuccinate lyase subfamily.

Its subcellular location is the cytoplasm. It catalyses the reaction 2-(N(omega)-L-arginino)succinate = fumarate + L-arginine. The protein operates within amino-acid biosynthesis; L-arginine biosynthesis; L-arginine from L-ornithine and carbamoyl phosphate: step 3/3. This Hahella chejuensis (strain KCTC 2396) protein is Argininosuccinate lyase.